A 210-amino-acid chain; its full sequence is Thymidylate kinase (210 aa).

11 to 18 is a binding site for ATP; it reads GVDGAGKT.

Belongs to the thymidylate kinase family.

The enzyme catalyses dTMP + ATP = dTDP + ADP. Functionally, phosphorylation of dTMP to form dTDP in both de novo and salvage pathways of dTTP synthesis. The protein is Thymidylate kinase (tmk) of Mycoplasma pneumoniae (strain ATCC 29342 / M129 / Subtype 1) (Mycoplasmoides pneumoniae).